The chain runs to 387 residues: Patatin-03 (387 aa).

A signal peptide spans 1–23 (MATTKSVLVLIFMILATTSSTFA). Residues 32–230 (LSIDGGGIKG…TVADPALLSV (199 aa)) enclose the PNPLA domain. The short motif at 36–41 (GGGIKG) is the GXGXXG element. Positions 75 to 79 (GTSTG) match the GXSXG motif. The active-site Nucleophile is S77. N-linked (GlcNAc...) asparagine glycans are attached at residues N115 and N203. D216 serves as the catalytic Proton acceptor. Residues 216–218 (DGA) carry the DGA/G motif.

It belongs to the patatin family. Tuber.

The protein resides in the vacuole. Its function is as follows. Probable lipolytic acyl hydrolase (LAH), an activity which is thought to be involved in the response of tubers to pathogens. The sequence is that of Patatin-03 from Solanum tuberosum (Potato).